We begin with the raw amino-acid sequence, 137 residues long: Large ribosomal subunit protein uL16 (137 aa).

The protein belongs to the universal ribosomal protein uL16 family. Part of the 50S ribosomal subunit.

In terms of biological role, binds 23S rRNA and is also seen to make contacts with the A and possibly P site tRNAs. This Bartonella quintana (strain Toulouse) (Rochalimaea quintana) protein is Large ribosomal subunit protein uL16.